We begin with the raw amino-acid sequence, 283 residues long: D-alanine aminotransferase (283 aa).

Y32 is a binding site for substrate. Position 51 (R51) interacts with pyridoxal 5'-phosphate. Substrate contacts are provided by R99 and H101. The active-site Proton acceptor is K146. Residue K146 is modified to N6-(pyridoxal phosphate)lysine. E178 contributes to the pyridoxal 5'-phosphate binding site.

The protein belongs to the class-IV pyridoxal-phosphate-dependent aminotransferase family. In terms of assembly, homodimer. Pyridoxal 5'-phosphate serves as cofactor.

It catalyses the reaction D-alanine + 2-oxoglutarate = D-glutamate + pyruvate. Functionally, acts on the D-isomers of alanine, leucine, aspartate, glutamate, aminobutyrate, norvaline and asparagine. The enzyme transfers an amino group from a substrate D-amino acid to the pyridoxal phosphate cofactor to form pyridoxamine and an alpha-keto acid in the first half-reaction. The second half-reaction is the reverse of the first, transferring the amino group from the pyridoxamine to a second alpha-keto acid to form the product D-amino acid via a ping-pong mechanism. This is an important process in the formation of D-alanine and D-glutamate, which are essential bacterial cell wall components. This is D-alanine aminotransferase (dat) from Lysinibacillus sphaericus (Bacillus sphaericus).